Here is a 160-residue protein sequence, read N- to C-terminus: Cytochrome b6-f complex subunit 4 (160 aa).

3 consecutive transmembrane segments (helical) span residues 36–56 (LLYVFPVVIIGTFACSIGLAI), 95–115 (LLGVLSMAAVPAGLLTVPFIE), and 131–151 (TVFLIGTVVSIWLGIGATMPI).

This sequence belongs to the cytochrome b family. PetD subfamily. As to quaternary structure, the 4 large subunits of the cytochrome b6-f complex are cytochrome b6, subunit IV (17 kDa polypeptide, petD), cytochrome f and the Rieske protein, while the 4 small subunits are petG, petL, petM and petN. The complex functions as a dimer.

It localises to the plastid. Its subcellular location is the chloroplast thylakoid membrane. Its function is as follows. Component of the cytochrome b6-f complex, which mediates electron transfer between photosystem II (PSII) and photosystem I (PSI), cyclic electron flow around PSI, and state transitions. The polypeptide is Cytochrome b6-f complex subunit 4 (Pyropia yezoensis (Susabi-nori)).